The chain runs to 874 residues: Probable inorganic carbon transporter subunit DabA (874 aa).

Zn(2+)-binding residues include Cys398, Asp400, His580, and Cys595.

It belongs to the inorganic carbon transporter (TC 9.A.2) DabA family. As to quaternary structure, forms a complex with DabB. Requires Zn(2+) as cofactor.

It is found in the cell membrane. Functionally, part of an energy-coupled inorganic carbon pump. The sequence is that of Probable inorganic carbon transporter subunit DabA from Bacillus cytotoxicus (strain DSM 22905 / CIP 110041 / 391-98 / NVH 391-98).